A 277-amino-acid polypeptide reads, in one-letter code: NH(3)-dependent NAD(+) synthetase (277 aa).

36–43 (GLSGGIDS) is an ATP binding site. Mg(2+) is bound at residue Asp42. Arg118 contacts deamido-NAD(+). Residue Thr138 coordinates ATP. Residue Glu143 coordinates Mg(2+). Positions 167 and 189 each coordinate ATP.

This sequence belongs to the NAD synthetase family. As to quaternary structure, homodimer.

The enzyme catalyses deamido-NAD(+) + NH4(+) + ATP = AMP + diphosphate + NAD(+) + H(+). It participates in cofactor biosynthesis; NAD(+) biosynthesis; NAD(+) from deamido-NAD(+) (ammonia route): step 1/1. Catalyzes the ATP-dependent amidation of deamido-NAD to form NAD. Uses ammonia as a nitrogen source. This Chlorobium phaeobacteroides (strain BS1) protein is NH(3)-dependent NAD(+) synthetase.